A 359-amino-acid chain; its full sequence is Protein RecA (359 aa).

73-80 contributes to the ATP binding site; the sequence is GPESSGKT.

Belongs to the RecA family.

Its subcellular location is the cytoplasm. Functionally, can catalyze the hydrolysis of ATP in the presence of single-stranded DNA, the ATP-dependent uptake of single-stranded DNA by duplex DNA, and the ATP-dependent hybridization of homologous single-stranded DNAs. It interacts with LexA causing its activation and leading to its autocatalytic cleavage. In Desulfovibrio desulfuricans (strain ATCC 27774 / DSM 6949 / MB), this protein is Protein RecA.